The sequence spans 336 residues: Holliday junction branch migration complex subunit RuvB (336 aa).

The tract at residues Ala4–Tyr184 is large ATPase domain (RuvB-L). ATP-binding positions include Ile23, Arg24, Gly65, Lys68, Thr69, Thr70, Glu131–Tyr133, Arg174, Tyr184, and Arg221. Thr69 contributes to the Mg(2+) binding site. The small ATPAse domain (RuvB-S) stretch occupies residues Asn185–Asp255. Residues Asn258–Arg336 are head domain (RuvB-H). The DNA site is built by Arg313 and Arg318.

It belongs to the RuvB family. In terms of assembly, homohexamer. Forms an RuvA(8)-RuvB(12)-Holliday junction (HJ) complex. HJ DNA is sandwiched between 2 RuvA tetramers; dsDNA enters through RuvA and exits via RuvB. An RuvB hexamer assembles on each DNA strand where it exits the tetramer. Each RuvB hexamer is contacted by two RuvA subunits (via domain III) on 2 adjacent RuvB subunits; this complex drives branch migration. In the full resolvosome a probable DNA-RuvA(4)-RuvB(12)-RuvC(2) complex forms which resolves the HJ.

It localises to the cytoplasm. It carries out the reaction ATP + H2O = ADP + phosphate + H(+). Functionally, the RuvA-RuvB-RuvC complex processes Holliday junction (HJ) DNA during genetic recombination and DNA repair, while the RuvA-RuvB complex plays an important role in the rescue of blocked DNA replication forks via replication fork reversal (RFR). RuvA specifically binds to HJ cruciform DNA, conferring on it an open structure. The RuvB hexamer acts as an ATP-dependent pump, pulling dsDNA into and through the RuvAB complex. RuvB forms 2 homohexamers on either side of HJ DNA bound by 1 or 2 RuvA tetramers; 4 subunits per hexamer contact DNA at a time. Coordinated motions by a converter formed by DNA-disengaged RuvB subunits stimulates ATP hydrolysis and nucleotide exchange. Immobilization of the converter enables RuvB to convert the ATP-contained energy into a lever motion, pulling 2 nucleotides of DNA out of the RuvA tetramer per ATP hydrolyzed, thus driving DNA branch migration. The RuvB motors rotate together with the DNA substrate, which together with the progressing nucleotide cycle form the mechanistic basis for DNA recombination by continuous HJ branch migration. Branch migration allows RuvC to scan DNA until it finds its consensus sequence, where it cleaves and resolves cruciform DNA. The chain is Holliday junction branch migration complex subunit RuvB from Aeromonas salmonicida (strain A449).